The following is a 307-amino-acid chain: N-acetylmuramic acid 6-phosphate etherase (307 aa).

Residues 62–225 (VVDAFRVGGR…TTASMIRIGK (164 aa)) enclose the SIS domain. Glu90 functions as the Proton donor in the catalytic mechanism. Glu121 is an active-site residue.

Belongs to the GCKR-like family. MurNAc-6-P etherase subfamily. In terms of assembly, homodimer.

It catalyses the reaction N-acetyl-D-muramate 6-phosphate + H2O = N-acetyl-D-glucosamine 6-phosphate + (R)-lactate. Its pathway is amino-sugar metabolism; 1,6-anhydro-N-acetylmuramate degradation. The protein operates within amino-sugar metabolism; N-acetylmuramate degradation. It participates in cell wall biogenesis; peptidoglycan recycling. Specifically catalyzes the cleavage of the D-lactyl ether substituent of MurNAc 6-phosphate, producing GlcNAc 6-phosphate and D-lactate. Together with AnmK, is also required for the utilization of anhydro-N-acetylmuramic acid (anhMurNAc) either imported from the medium or derived from its own cell wall murein, and thus plays a role in cell wall recycling. This Brucella anthropi (strain ATCC 49188 / DSM 6882 / CCUG 24695 / JCM 21032 / LMG 3331 / NBRC 15819 / NCTC 12168 / Alc 37) (Ochrobactrum anthropi) protein is N-acetylmuramic acid 6-phosphate etherase.